The following is a 304-amino-acid chain: Polyisoprenyl-teichoic acid--peptidoglycan teichoic acid transferase TagU (304 aa).

At 1 to 4 (MKKK) the chain is on the cytoplasmic side. Residues 5 to 25 (ILFWILGIIGIMIIGGGVYAY) form a helical; Signal-anchor for type II membrane protein membrane-spanning segment. Topologically, residues 26 to 304 (NVYSSVSKTL…KLRAHLELTK (279 aa)) are extracellular.

It belongs to the LytR/CpsA/Psr (LCP) family.

The protein resides in the cell membrane. It participates in cell wall biogenesis. Functionally, may catalyze the final step in cell wall teichoic acid biosynthesis, the transfer of the anionic cell wall polymers (APs) from their lipid-linked precursor to the cell wall peptidoglycan (PG). The chain is Polyisoprenyl-teichoic acid--peptidoglycan teichoic acid transferase TagU from Bacillus mycoides (strain KBAB4) (Bacillus weihenstephanensis).